The following is a 210-amino-acid chain: Large ribosomal subunit protein uL16 (210 aa).

It belongs to the universal ribosomal protein uL16 family. Component of the large ribosomal subunit. Mature ribosomes consist of a small (40S) and a large (60S) subunit. The 40S subunit contains about 33 different proteins and 1 molecule of RNA (18S). The 60S subunit contains about 49 different proteins and 3 molecules of RNA (28S, 5.8S and 5S).

It localises to the cytoplasm. Component of the large ribosomal subunit. Plays a role in the formation of actively translating ribosomes. In terms of biological role, (Microbial infection) Seems to bind to the leucine zipper of viral and cellular JUN. This is Large ribosomal subunit protein uL16 from Gallus gallus (Chicken).